The following is a 458-amino-acid chain: Zinc finger protein 239 (458 aa).

A Glycyl lysine isopeptide (Lys-Gly) (interchain with G-Cter in SUMO2) cross-link involves residue Lys108. Residue Ser191 is modified to Phosphoserine. C2H2-type zinc fingers lie at residues Tyr207 to His229, Tyr235 to His257, Tyr263 to His285, Tyr291 to His313, Tyr319 to His341, Tyr347 to His369, Tyr375 to His397, Tyr403 to His425, and Tyr431 to His453.

This sequence belongs to the krueppel C2H2-type zinc-finger protein family.

The protein localises to the nucleus. Its function is as follows. May be involved in transcriptional regulation. The protein is Zinc finger protein 239 (ZNF239) of Pongo abelii (Sumatran orangutan).